The following is a 294-amino-acid chain: DEP domain-containing protein 4 (294 aa).

The region spanning 71-162 (LQAQVEIKRR…SNISLYRFLG (92 aa)) is the DEP domain.

The chain is DEP domain-containing protein 4 (DEPDC4) from Homo sapiens (Human).